Reading from the N-terminus, the 133-residue chain is Ribonuclease P protein component (133 aa).

Belongs to the RnpA family. As to quaternary structure, consists of a catalytic RNA component (M1 or rnpB) and a protein subunit.

It catalyses the reaction Endonucleolytic cleavage of RNA, removing 5'-extranucleotides from tRNA precursor.. Functionally, RNaseP catalyzes the removal of the 5'-leader sequence from pre-tRNA to produce the mature 5'-terminus. It can also cleave other RNA substrates such as 4.5S RNA. The protein component plays an auxiliary but essential role in vivo by binding to the 5'-leader sequence and broadening the substrate specificity of the ribozyme. The polypeptide is Ribonuclease P protein component (Pseudomonas putida (strain ATCC 47054 / DSM 6125 / CFBP 8728 / NCIMB 11950 / KT2440)).